A 156-amino-acid polypeptide reads, in one-letter code: Aspartate carbamoyltransferase regulatory chain (156 aa).

Zn(2+) contacts are provided by Cys-109, Cys-114, Cys-140, and Cys-143.

The protein belongs to the PyrI family. Contains catalytic and regulatory chains. Requires Zn(2+) as cofactor.

Involved in allosteric regulation of aspartate carbamoyltransferase. In Methanosarcina barkeri (strain Fusaro / DSM 804), this protein is Aspartate carbamoyltransferase regulatory chain.